We begin with the raw amino-acid sequence, 89 residues long: Small ribosomal subunit protein uS15 (89 aa).

Belongs to the universal ribosomal protein uS15 family. In terms of assembly, part of the 30S ribosomal subunit. Forms a bridge to the 50S subunit in the 70S ribosome, contacting the 23S rRNA.

One of the primary rRNA binding proteins, it binds directly to 16S rRNA where it helps nucleate assembly of the platform of the 30S subunit by binding and bridging several RNA helices of the 16S rRNA. Functionally, forms an intersubunit bridge (bridge B4) with the 23S rRNA of the 50S subunit in the ribosome. The sequence is that of Small ribosomal subunit protein uS15 from Burkholderia ambifaria (strain MC40-6).